The sequence spans 150 residues: FAD synthase (150 aa).

Residues 16–17 (VF), 21–24 (HVGH), and Asp102 contribute to the ATP site.

Belongs to the archaeal FAD synthase family. As to quaternary structure, homodimer. The cofactor is a divalent metal cation.

It carries out the reaction FMN + ATP + H(+) = FAD + diphosphate. Its pathway is cofactor biosynthesis; FAD biosynthesis; FAD from FMN: step 1/1. In terms of biological role, catalyzes the transfer of the AMP portion of ATP to flavin mononucleotide (FMN) to produce flavin adenine dinucleotide (FAD) coenzyme. The chain is FAD synthase from Thermococcus onnurineus (strain NA1).